Here is a 93-residue protein sequence, read N- to C-terminus: Large ribosomal subunit protein uL23cz/uL23cy (93 aa).

This sequence belongs to the universal ribosomal protein uL23 family. Part of the 50S ribosomal subunit.

It localises to the plastid. It is found in the chloroplast. In terms of biological role, binds to 23S rRNA. The polypeptide is Large ribosomal subunit protein uL23cz/uL23cy (rpl23-A) (Glycine max (Soybean)).